The sequence spans 103 residues: MANQRIRIRLKSFDHRLIDQSAQEIVDTAKRTGAQVCGPVPLPTRIERFNVLTSPHVNKDARDQYEIRTHKRMVDIVQPTDKTVDALMKLDLAAGVDVQIALG.

This sequence belongs to the universal ribosomal protein uS10 family. As to quaternary structure, part of the 30S ribosomal subunit.

Its function is as follows. Involved in the binding of tRNA to the ribosomes. In Psychrobacter arcticus (strain DSM 17307 / VKM B-2377 / 273-4), this protein is Small ribosomal subunit protein uS10.